Reading from the N-terminus, the 459-residue chain is uncharacterized protein (459 aa).

The next 12 membrane-spanning stretches (helical) occupy residues 25–45 (SYGF…IYLL), 52–72 (AGIP…FAAI), 95–115 (PYLL…FLSP), 123–143 (LIYA…VNIP), 167–187 (IGSL…LVKF), 192–212 (VGYP…FYIC), 249–269 (VLMT…LVYF), 279–299 (LMAY…VFLP), 310–330 (TAMI…MLPS), 332–352 (VYVF…PNGI), 389–409 (SLSG…PNAV), and 420–440 (ALLL…IGFL).

This sequence belongs to the sodium:galactoside symporter (TC 2.A.2) family.

The protein resides in the cell membrane. This is an uncharacterized protein from Bacillus subtilis (strain 168).